The sequence spans 397 residues: Probable protein phosphatase 2C 74 (397 aa).

In terms of domain architecture, PPM-type phosphatase spans 133-391 (GFWVASRRGL…DDVTVMVVDL (259 aa)). 4 residues coordinate Mn(2+): Asp-170, Gly-171, Asp-343, and Asp-382.

Belongs to the PP2C family. The cofactor is Mg(2+). Requires Mn(2+) as cofactor.

The enzyme catalyses O-phospho-L-seryl-[protein] + H2O = L-seryl-[protein] + phosphate. It catalyses the reaction O-phospho-L-threonyl-[protein] + H2O = L-threonyl-[protein] + phosphate. The polypeptide is Probable protein phosphatase 2C 74 (Oryza sativa subsp. japonica (Rice)).